The following is a 135-amino-acid chain: C-type lectin APL (135 aa).

4 disulfide bridges follow: Cys-3–Cys-14, Cys-31–Cys-131, Cys-38–Cys-133, and Cys-106–Cys-123. Residues 10 to 132 enclose the C-type lectin domain; it reads MNGLCYKIFD…CESKNAFLCQ (123 aa). Positions 96, 98, 104, 119, and 120 each coordinate Ca(2+). Residues 96-98 carry the Galactose-binding motif; that stretch reads QPD.

It belongs to the true venom lectin family. Homodimer; disulfide-linked. In terms of tissue distribution, expressed by the venom gland.

It is found in the secreted. Its function is as follows. Beta-galactoside lectin that agglutinates rabbit and human erythrocytes in a calcium-dependent fashion (MHC is 0.21 ug/ml on rabbit erythrocytes). Galactose (15 mM), lactose (20 mM), rhamnose (20 mM) and EGTA strongly inhibit this activity. The sequence is that of C-type lectin APL from Agkistrodon piscivorus piscivorus (Eastern cottonmouth).